The following is a 323-amino-acid chain: tRNA U34 carboxymethyltransferase (323 aa).

Residues Lys-91, Trp-105, Lys-110, Gly-130, 181-182, Met-196, Tyr-200, and Arg-315 contribute to the carboxy-S-adenosyl-L-methionine site; that span reads IE.

It belongs to the class I-like SAM-binding methyltransferase superfamily. CmoB family. Homotetramer.

The catalysed reaction is carboxy-S-adenosyl-L-methionine + 5-hydroxyuridine(34) in tRNA = 5-carboxymethoxyuridine(34) in tRNA + S-adenosyl-L-homocysteine + H(+). Catalyzes carboxymethyl transfer from carboxy-S-adenosyl-L-methionine (Cx-SAM) to 5-hydroxyuridine (ho5U) to form 5-carboxymethoxyuridine (cmo5U) at position 34 in tRNAs. This Sodalis glossinidius (strain morsitans) protein is tRNA U34 carboxymethyltransferase.